Here is a 1222-residue protein sequence, read N- to C-terminus: Alpha-mannosidase D (1222 aa).

Positions 1-21 are cleaved as a signal peptide; that stretch reads MESSKFVKIIWVFGIWILVFT. Residues 22–1170 are Extracellular-facing; sequence FLIIYNNYDY…KYNRPNHLAL (1149 aa). Residues His71 and Asp73 each contribute to the Zn(2+) site. Asn175 carries an N-linked (GlcNAc...) asparagine glycan. Residues Asp185 and His453 each contribute to the Zn(2+) site. The Nucleophile role is filled by Asp185. N-linked (GlcNAc...) asparagine glycans are attached at residues Asn492, Asn496, Asn547, Asn551, Asn566, Asn613, Asn665, Asn768, Asn785, Asn952, Asn981, Asn1069, and Asn1084. Positions 493–549 are enriched in low complexity; that stretch reads KSNNKTNNNNNNNNKNNNNNNNNNNNNNNNLKNTNSISTTGSSSSSGSGSSNNNNNT. Residues 493–554 form a disordered region; sequence KSNNKTNNNN…NNNNTVNKSE (62 aa). A helical membrane pass occupies residues 1171–1191; it reads ILSLSIGIPAGILIIVIALVV. At 1192–1222 the chain is on the cytoplasmic side; sequence TYKKRKNRKTLTSSNSSSNLIQQEDQTDYSP. Low complexity predominate over residues 1202–1211; that stretch reads LTSSNSSSNL. Residues 1202–1222 are disordered; sequence LTSSNSSSNLIQQEDQTDYSP. Over residues 1212 to 1222 the composition is skewed to polar residues; that stretch reads IQQEDQTDYSP.

It belongs to the glycosyl hydrolase 38 family. Zn(2+) serves as cofactor.

The protein resides in the membrane. It catalyses the reaction Hydrolysis of terminal, non-reducing alpha-D-mannose residues in alpha-D-mannosides.. This is Alpha-mannosidase D (manD) from Dictyostelium discoideum (Social amoeba).